The following is a 426-amino-acid chain: DUF724 domain-containing protein 9 (426 aa).

Polar residues-rich tracts occupy residues 164–184 (ESSLTQGSGDETSDSVRNANE) and 213–222 (PRNQNASVND). Residues 164–248 (ESSLTQGSGD…REESLCSDAS (85 aa)) are disordered. Residues 223–242 (STRENENSEDINRKRKREES) are compositionally biased toward basic and acidic residues. The DUF724 domain maps to 256–425 (LPFEKKLSIW…LQFQTTASAP (170 aa)). Residues 370 to 402 (AEKESIKIENERKILELQRLNEEVDKEIAQSKS) are a coiled coil.

In terms of tissue distribution, expressed in flowers.

Its subcellular location is the nucleus. In terms of biological role, may be involved in the polar growth of plant cells via transportation of RNAs. The sequence is that of DUF724 domain-containing protein 9 from Arabidopsis thaliana (Mouse-ear cress).